A 434-amino-acid chain; its full sequence is Nicotinate phosphoribosyltransferase (434 aa).

H242 is subject to Phosphohistidine; by autocatalysis.

The protein belongs to the NAPRTase family. In terms of processing, transiently phosphorylated on a His residue during the reaction cycle. Phosphorylation strongly increases the affinity for substrates and increases the rate of nicotinate D-ribonucleotide production. Dephosphorylation regenerates the low-affinity form of the enzyme, leading to product release.

It catalyses the reaction nicotinate + 5-phospho-alpha-D-ribose 1-diphosphate + ATP + H2O = nicotinate beta-D-ribonucleotide + ADP + phosphate + diphosphate. The protein operates within cofactor biosynthesis; NAD(+) biosynthesis; nicotinate D-ribonucleotide from nicotinate: step 1/1. Its function is as follows. Catalyzes the synthesis of beta-nicotinate D-ribonucleotide from nicotinate and 5-phospho-D-ribose 1-phosphate at the expense of ATP. The polypeptide is Nicotinate phosphoribosyltransferase (Brucella canis (strain ATCC 23365 / NCTC 10854 / RM-666)).